The following is a 352-amino-acid chain: Glycerol-1-phosphate dehydrogenase [NAD(P)+] (352 aa).

NAD(+) is bound by residues 99-103 (GAKID) and 121-124 (TAPS). Residue aspartate 126 coordinates substrate. Residue serine 130 participates in NAD(+) binding. Position 173 (aspartate 173) interacts with substrate. Aspartate 173 and histidine 253 together coordinate Zn(2+). Histidine 257 is a binding site for substrate. Histidine 269 contributes to the Zn(2+) binding site.

The protein belongs to the glycerol-1-phosphate dehydrogenase family. Requires Zn(2+) as cofactor.

Its subcellular location is the cytoplasm. The catalysed reaction is sn-glycerol 1-phosphate + NAD(+) = dihydroxyacetone phosphate + NADH + H(+). The enzyme catalyses sn-glycerol 1-phosphate + NADP(+) = dihydroxyacetone phosphate + NADPH + H(+). The protein operates within membrane lipid metabolism; glycerophospholipid metabolism. Catalyzes the NAD(P)H-dependent reduction of dihydroxyacetonephosphate (DHAP or glycerone phosphate) to glycerol 1-phosphate (G1P). The G1P thus generated is used as the glycerophosphate backbone of phospholipids in the cellular membranes of Archaea. This is Glycerol-1-phosphate dehydrogenase [NAD(P)+] from Thermoplasma acidophilum (strain ATCC 25905 / DSM 1728 / JCM 9062 / NBRC 15155 / AMRC-C165).